Here is an 84-residue protein sequence, read N- to C-terminus: MAQAQSPLQWLATKLIRGYQIFISPILGPKCRFHPTCSNYALEAIRLHGFVKGSWFAGKRVLKCHPLHPGGEDPVPPKNNRCNK.

It belongs to the UPF0161 family.

It is found in the cell inner membrane. Functionally, could be involved in insertion of integral membrane proteins into the membrane. The chain is Putative membrane protein insertion efficiency factor from Shewanella loihica (strain ATCC BAA-1088 / PV-4).